Reading from the N-terminus, the 352-residue chain is C-C chemokine receptor type 5 (352 aa).

The Extracellular segment spans residues 1 to 30; that stretch reads MDYQVSSPIYDINYYTSEPCQKINVKQIAA. Tyr-3 carries the sulfotyrosine modification. Residues Ser-6 and Ser-7 are each glycosylated (O-linked (GalNAc...) serine). Sulfotyrosine is present on residues Tyr-10, Tyr-14, and Tyr-15. 2 disulfide bridges follow: Cys-20-Cys-269 and Cys-101-Cys-178. The helical transmembrane segment at 31–58 threads the bilayer; that stretch reads RLLPPLYSLVFIFGFVGNMLVILILINC. Over 59 to 68 the chain is Cytoplasmic; sequence KRLKSMTDIY. A helical membrane pass occupies residues 69-89; the sequence is LLNLAISDLFFLLTVPFWAHY. The Extracellular portion of the chain corresponds to 90 to 102; the sequence is AAAQWDFGNTMCQ. A helical membrane pass occupies residues 103-124; that stretch reads LLTGLYFIGFFSGIFFIILLTI. Topologically, residues 125–141 are cytoplasmic; sequence DRYLAVVHAVFALKART. A helical membrane pass occupies residues 142–166; sequence VTFGVVTSVITWVVAVFASLPGIIF. Over 167–198 the chain is Extracellular; that stretch reads TRSQKEGLHYTCSSHFPYSQYQFWKNFQTLKI. A helical transmembrane segment spans residues 199 to 218; it reads VILGLVLPLLVMVICYSGIL. The Cytoplasmic portion of the chain corresponds to 219 to 235; the sequence is KTLLRCRNEKKRHRAVR. A helical transmembrane segment spans residues 236–260; the sequence is LIFTIMIVYFLFWAPYNIVLLLNTF. Residues 261–277 are Extracellular-facing; that stretch reads QEFFGLNNCSSSNRLDQ. The helical transmembrane segment at 278–301 threads the bilayer; the sequence is AMQVTETLGMTHCCINPIIYAFVG. The Cytoplasmic portion of the chain corresponds to 302–352; it reads EKFRNYLLVFFQKHIAKRFCKCCSIFQQEAPERASSVYTRSTGEQEISVGL. S-palmitoyl cysteine attachment occurs at residues Cys-321, Cys-323, and Cys-324. 4 positions are modified to phosphoserine; by BARK1: Ser-336, Ser-337, Ser-342, and Ser-349.

The protein belongs to the G-protein coupled receptor 1 family. Interacts with PRAF2. Efficient ligand binding to CCL3/MIP-1alpha and CCL4/MIP-1beta requires sulfation, O-glycosylation and sialic acid modifications. Glycosylation on Ser-6 is required for efficient binding of CCL4. Interacts with GRK2. Interacts with ARRB1 and ARRB2. Interacts with CNIH4. Interacts with S100A4; this interaction stimulates T-lymphocyte chemotaxis. In terms of assembly, (Microbial infection) Interacts with HIV-1 surface protein gp120. As to quaternary structure, (Microbial infection) May interact with human cytomegalovirus/HHV-5 protein UL78. In terms of processing, sulfated on at least 2 of the N-terminal tyrosines. Sulfation contributes to the efficiency of HIV-1 entry and is required for efficient binding of the chemokines, CCL3 and CCL4. Post-translationally, O-glycosylated, but not N-glycosylated. Ser-6 appears to be the major site even if Ser-7 may be also O-glycosylated. Also sialylated glycans present which contribute to chemokine binding. Thr-16 and Ser-17 may also be glycosylated and, if so, with small moieties such as a T-antigen. Palmitoylation in the C-terminal is important for cell surface expression, and to a lesser extent, for HIV entry. In terms of processing, phosphorylation on serine residues in the C-terminal is stimulated by binding CC chemokines especially by APO-RANTES. As to expression, highly expressed in spleen, thymus, in the myeloid cell line THP-1, in the promyeloblastic cell line KG-1a and on CD4+ and CD8+ T-cells. Medium levels in peripheral blood leukocytes and in small intestine. Low levels in ovary and lung.

Its subcellular location is the cell membrane. In terms of biological role, receptor for a number of inflammatory CC-chemokines including CCL3/MIP-1-alpha, CCL4/MIP-1-beta and RANTES and subsequently transduces a signal by increasing the intracellular calcium ion level. May play a role in the control of granulocytic lineage proliferation or differentiation. Participates in T-lymphocyte migration to the infection site by acting as a chemotactic receptor. Its function is as follows. (Microbial infection) Acts as a coreceptor (CD4 being the primary receptor) of human immunodeficiency virus-1/HIV-1. The polypeptide is C-C chemokine receptor type 5 (Homo sapiens (Human)).